The sequence spans 521 residues: CDP-diacylglycerol--glycerol-3-phosphate 3-phosphatidyltransferase (521 aa).

Ala91 to Ser98 is an ATP binding site. PLD phosphodiesterase domains lie at Gly177–Tyr203 and Asn419–Ala457. Catalysis depends on residues His182, Lys184, and Asp189.

Belongs to the CDP-alcohol phosphatidyltransferase class-II family.

Its subcellular location is the mitochondrion. It catalyses the reaction a CDP-1,2-diacyl-sn-glycerol + sn-glycerol 3-phosphate = a 1,2-diacyl-sn-glycero-3-phospho-(1'-sn-glycero-3'-phosphate) + CMP + H(+). It participates in phospholipid metabolism; phosphatidylglycerol biosynthesis; phosphatidylglycerol from CDP-diacylglycerol: step 1/2. Its function is as follows. Essential for the viability of mitochondrial petite mutant. Catalyzes the committed step to the synthesis of the acidic phospholipids. This chain is CDP-diacylglycerol--glycerol-3-phosphate 3-phosphatidyltransferase (PGS1), found in Saccharomyces pastorianus (Lager yeast).